Reading from the N-terminus, the 288-residue chain is MGVRKLKPVTNGQRHAILYDYSELTRREPEKSLTYYYKRALGRSRQQGKITSRWKGAGNKIRYRLIDFKRDKSLIPAKVYSIEYDPFRSARIVLLHYKDGEKKYILWPDKLNVGDTVVSISYEDAIKGKELPDIKPGNAMPLRFIPVGTFIHNIELNPGRGAKLVRAAGLSAQVIGKIEGYAQVRLPSGEVRLINDKCMATIGVVGLAEHELVKLGKAGRSRWLGMRPNVRGTAMNPVDHPHGGGEGKTKGKHPESPWGWKTKGYKTKRGKRYSDRFIISKRNAGGKV.

The interval 232–265 (GTAMNPVDHPHGGGEGKTKGKHPESPWGWKTKGY) is disordered. The segment covering 239 to 255 (DHPHGGGEGKTKGKHPE) has biased composition (basic and acidic residues).

The protein belongs to the universal ribosomal protein uL2 family. In terms of assembly, part of the 50S ribosomal subunit. Forms a bridge to the 30S subunit in the 70S ribosome.

One of the primary rRNA binding proteins. Required for association of the 30S and 50S subunits to form the 70S ribosome, for tRNA binding and peptide bond formation. It has been suggested to have peptidyltransferase activity; this is somewhat controversial. Makes several contacts with the 16S rRNA in the 70S ribosome. The polypeptide is Large ribosomal subunit protein uL2 (Hydrogenobaculum sp. (strain Y04AAS1)).